Here is a 440-residue protein sequence, read N- to C-terminus: Suppressor of cytokine signaling 4 (440 aa).

Over residues 1–11 (MAENSESNSKN) the composition is skewed to polar residues. A disordered region spans residues 1–29 (MAENSESNSKNVDVRPKTSRSRSADRKDG). A compositionally biased stretch (basic and acidic residues) spans 12 to 29 (VDVRPKTSRSRSADRKDG). In terms of domain architecture, SH2 spans 286–381 (CYWGVMDKYA…FFEPLLSTPL (96 aa)). The SOCS box domain occupies 376–425 (LLSTPLIRTFPFSLQHICRTVICNCTTYDGIDALPIPSSMKLYLKEYHYK).

Its pathway is protein modification; protein ubiquitination. Its function is as follows. SOCS family proteins form part of a classical negative feedback system that regulates cytokine signal transduction. Substrate-recognition component of a SCF-like ECS (Elongin BC-CUL2/5-SOCS-box protein) E3 ubiquitin-protein ligase complex which mediates the ubiquitination and subsequent proteasomal degradation of target proteins. Inhibits EGF signaling by mediating the degradation of the Tyr-phosphorylated EGF receptor/EGFR. This Bos taurus (Bovine) protein is Suppressor of cytokine signaling 4 (SOCS4).